Consider the following 303-residue polypeptide: MNSIGLVTKLSDPMAIRATSELTEWLNKQHRRVTVTAEAAKAANISPKLAAIKPLEDIGEGQDLVIVLGGDGTFIGAARDVLRWKVPVLGVNMGRLGFLTEVSYDEMYDNLKEVFAGHYNVEDRMMLTAFIRRESGEVLSHHVLNDVVAHKGHLARMMEFQVSINGQHVFTSRADGLIVATPTGSTGYSLSAGGPIIHPRLDTIIINPICPHTLSNRPIAVPGDGQISFRLTQNEPDRLLTLDGQTGVPLLDGDEIVIRKSDRSLRVIHSPDRNYYDILRKKLHWAETVGTKRDLSLRPADDR.

Asp-71 acts as the Proton acceptor in catalysis. Residues 71–72 (DG), 145–146 (ND), Arg-156, Arg-173, Asp-175, 186–191 (TGYSLS), and Gln-245 each bind NAD(+).

The protein belongs to the NAD kinase family. A divalent metal cation serves as cofactor.

The protein resides in the cytoplasm. It carries out the reaction NAD(+) + ATP = ADP + NADP(+) + H(+). Involved in the regulation of the intracellular balance of NAD and NADP, and is a key enzyme in the biosynthesis of NADP. Catalyzes specifically the phosphorylation on 2'-hydroxyl of the adenosine moiety of NAD to yield NADP. The chain is NAD kinase from Magnetococcus marinus (strain ATCC BAA-1437 / JCM 17883 / MC-1).